The sequence spans 260 residues: Tropinone reductase homolog At2g29330 (260 aa).

13-37 (LVTGGASGIGHAIVEELAGFGAKIH) is a binding site for NADP(+). Residue serine 146 coordinates substrate. Tyrosine 159 functions as the Proton acceptor in the catalytic mechanism.

The protein belongs to the short-chain dehydrogenases/reductases (SDR) family. SDR65C subfamily.

In terms of biological role, reductase active only on small flexible lipophilic carbonyls. No activity with cyclic monoterpenes, tropinone, nitrogen-containing tropinone analogs, tropine or pseudotropine as substrate. The chain is Tropinone reductase homolog At2g29330 from Arabidopsis thaliana (Mouse-ear cress).